A 749-amino-acid chain; its full sequence is Ribosome-releasing factor 2, mitochondrial (749 aa).

A mitochondrion-targeting transit peptide spans 1–22 (MLLLLCNRSVVPRGIRRILRTA). Residues 44–322 (KNIRNIGILA…AVLKYLPAPN (279 aa)) enclose the tr-type G domain. GTP contacts are provided by residues 53–60 (AHIDGGKT), 117–121 (DTPGH), and 171–174 (NKMD).

Belongs to the TRAFAC class translation factor GTPase superfamily. Classic translation factor GTPase family. EF-G/EF-2 subfamily.

The protein resides in the mitochondrion. Its function is as follows. Mitochondrial GTPase that mediates the disassembly of ribosomes from messenger RNA at the termination of mitochondrial protein biosynthesis. Not involved in the GTP-dependent ribosomal translocation step during translation elongation. This Culex quinquefasciatus (Southern house mosquito) protein is Ribosome-releasing factor 2, mitochondrial.